We begin with the raw amino-acid sequence, 140 residues long: Methylglyoxal synthase (140 aa).

Residues 1–140 (MKIALIAHDR…HDQDSNPINL (140 aa)) form the MGS-like domain. Substrate contacts are provided by residues His-8, Lys-12, 34–37 (TGTT), and 54–55 (SG). Residue Asp-60 is the Proton donor/acceptor of the active site. His-87 is a substrate binding site.

The protein belongs to the methylglyoxal synthase family.

The catalysed reaction is dihydroxyacetone phosphate = methylglyoxal + phosphate. In terms of biological role, catalyzes the formation of methylglyoxal from dihydroxyacetone phosphate. This chain is Methylglyoxal synthase, found in Latilactobacillus sakei subsp. sakei (strain 23K) (Lactobacillus sakei subsp. sakei).